The following is a 210-amino-acid chain: 3-hydroxy-3-methylglutaryl-coenzyme A reductase 2 (210 aa).

Residues Lys21 and Asp97 each act as charge relay system in the active site. The chain crosses the membrane as a helical span at residues 166–186 (LLATIVAGSVLAGELSLMSAI). The Proton donor role is filled by His195. N-linked (GlcNAc...) asparagine glycosylation is present at Asn199.

Belongs to the HMG-CoA reductase family.

It is found in the endoplasmic reticulum membrane. It localises to the mitochondrion membrane. The protein resides in the plastid membrane. It catalyses the reaction (R)-mevalonate + 2 NADP(+) + CoA = (3S)-3-hydroxy-3-methylglutaryl-CoA + 2 NADPH + 2 H(+). It participates in metabolic intermediate biosynthesis; (R)-mevalonate biosynthesis; (R)-mevalonate from acetyl-CoA: step 3/3. In terms of biological role, catalyzes the synthesis of mevalonate. The specific precursor of all isoprenoid compounds present in plants. The sequence is that of 3-hydroxy-3-methylglutaryl-coenzyme A reductase 2 (HMGR2) from Hevea brasiliensis (Para rubber tree).